Consider the following 101-residue polypeptide: Urease subunit beta (101 aa).

It belongs to the urease beta subunit family. Heterotrimer of UreA (gamma), UreB (beta) and UreC (alpha) subunits. Three heterotrimers associate to form the active enzyme.

The protein resides in the cytoplasm. The enzyme catalyses urea + 2 H2O + H(+) = hydrogencarbonate + 2 NH4(+). The protein operates within nitrogen metabolism; urea degradation; CO(2) and NH(3) from urea (urease route): step 1/1. The sequence is that of Urease subunit beta from Ralstonia nicotianae (strain ATCC BAA-1114 / GMI1000) (Ralstonia solanacearum).